The chain runs to 434 residues: V-type ATP synthase beta chain (434 aa).

It belongs to the ATPase alpha/beta chains family.

Its function is as follows. Produces ATP from ADP in the presence of a proton gradient across the membrane. The V-type beta chain is a regulatory subunit. The sequence is that of V-type ATP synthase beta chain from Borrelia garinii subsp. bavariensis (strain ATCC BAA-2496 / DSM 23469 / PBi) (Borreliella bavariensis).